The chain runs to 254 residues: MNCEELTNKLTNFVLSKVGEANAKGVVLGLSGGIDSSLVATICVKALGKDNVLGVIMPEKNSNTQDKEHAELLANQLGIKYTVSDITDVLKSFGAGGYIPTKEFDKMADGNLKPRIRMCILYYFANKNNLLVAGTSNKSEIYMGYGTKYGDLGSDFLLIGNLFKTEVRELSKYLGVPDEIINKAPSAGLWEGQTDEKELGITYELLDKVLMAIEQNKEKEDISKELTVPIEKIEEILNRIESNKHKSQPIPIPN.

29–36 (GLSGGIDS) contributes to the ATP binding site. Mg(2+) is bound at residue aspartate 35. Arginine 115 contributes to the deamido-NAD(+) binding site. An ATP-binding site is contributed by threonine 135. Glutamate 140 serves as a coordination point for Mg(2+). Positions 148 and 155 each coordinate deamido-NAD(+). ATP contacts are provided by lysine 164 and serine 186. A deamido-NAD(+)-binding site is contributed by 245–246 (HK).

The protein belongs to the NAD synthetase family. In terms of assembly, homodimer.

The enzyme catalyses deamido-NAD(+) + NH4(+) + ATP = AMP + diphosphate + NAD(+) + H(+). It participates in cofactor biosynthesis; NAD(+) biosynthesis; NAD(+) from deamido-NAD(+) (ammonia route): step 1/1. Functionally, catalyzes the ATP-dependent amidation of deamido-NAD to form NAD. Uses ammonia as a nitrogen source. The polypeptide is NH(3)-dependent NAD(+) synthetase (Methanococcus aeolicus (strain ATCC BAA-1280 / DSM 17508 / OCM 812 / Nankai-3)).